A 958-amino-acid chain; its full sequence is Atromentin synthetase greA (958 aa).

The segment at 60–465 is adenylation (A) domain; sequence SIQTKTFSAF…SGRIKDTVIV (406 aa). One can recognise a Carrier domain in the interval 597 to 675; the sequence is APSTETEKAL…SLANYVNALL (79 aa). Residues 602 to 672 are thiolation and peptide carrier (T) domain; that stretch reads TEKALAKIYA…VVSSLANYVN (71 aa). O-(pantetheine 4'-phosphoryl)serine is present on Ser-634. The segment at 698 to 946 is thioesterase (TE) domain; that stretch reads PIFFVHPGVG…MDFDHVPQFQ (249 aa).

It belongs to the ATP-dependent AMP-binding enzyme family.

It functions in the pathway secondary metabolite biosynthesis. Functionally, an L-tyrosine:2-oxoglutarate aminotransferase and atromentin synthetase greA catalyze consecutive steps to turn over L-tyrosine into atromentin, which represents the generic precursor molecule for the entire terphenylquinone and pulvinic acid family of pigments, which are widely distributed secondary metabolites in homobasidiomycetes. The first step catalyzed by the aminotransferase converts L-tyrosine in to 4-hydroxyphenylpyruvate (4-HPP). Adenylation of two 4-HPP monomers by the greA adenylation (A) domain, covalent tethering of the monomers as a thioester and oxoester onto the greA thiolation (T) and thioesterase (TE) domains, respectively, and symmetric C-C-bond formation between two monomers catalyzed by the greA TE domain leads to atromentin. In Suillus grevillei (Larch bolete), this protein is Atromentin synthetase greA (greA).